Consider the following 464-residue polypeptide: Chitobiosyldiphosphodolichol beta-mannosyltransferase (464 aa).

The Lumenal segment spans residues 1–2; it reads MA. Residues 3 to 23 form a helical membrane-spanning segment; that stretch reads ASCLVLLALCLLLPLLLLGGW. Over 24–99 the chain is Cytoplasmic; sequence KRWRRGRAAR…ELQSLAVGPR (76 aa). The helical intramembrane region spans 100–120; it reads VFQYGVKVVLQAMYLLWKLMW. The Cytoplasmic segment spans residues 121 to 464; the sequence is REPGAYIFLQ…QTVLPLVMDT (344 aa). Ser-242 carries the post-translational modification Phosphoserine. The segment at 243 to 262 is disordered; it reads PFRARSEPEDPVTERSAFTE.

The protein belongs to the glycosyltransferase group 1 family. Glycosyltransferase 33 subfamily.

It localises to the endoplasmic reticulum membrane. It carries out the reaction an N,N'-diacetylchitobiosyl-diphospho-di-trans,poly-cis-dolichol + GDP-alpha-D-mannose = a beta-D-Man-(1-&gt;4)-beta-D-GlcNAc-(1-&gt;4)-alpha-D-GlcNAc-diphospho-di-trans,poly-cis-dolichol + GDP + H(+). The protein operates within protein modification; protein glycosylation. In terms of biological role, mannosyltransferase that operates in the biosynthetic pathway of dolichol-linked oligosaccharides, the glycan precursors employed in protein asparagine (N)-glycosylation. The assembly of dolichol-linked oligosaccharides begins on the cytosolic side of the endoplasmic reticulum membrane and finishes in its lumen. The sequential addition of sugars to dolichol pyrophosphate produces dolichol-linked oligosaccharides containing fourteen sugars, including two GlcNAcs, nine mannoses and three glucoses. Once assembled, the oligosaccharide is transferred from the lipid to nascent proteins by oligosaccharyltransferases. Catalyzes, on the cytoplasmic face of the endoplasmic reticulum, the addition of the first mannose residues to the dolichol-linked oligosaccharide chain, to produce Man1GlcNAc(2)-PP-dolichol core oligosaccharide. Man1GlcNAc(2)-PP-dolichol is a substrate for ALG2, the following enzyme in the biosynthetic pathway. The chain is Chitobiosyldiphosphodolichol beta-mannosyltransferase from Homo sapiens (Human).